The following is a 449-amino-acid chain: Phosphoglucosamine mutase (449 aa).

The Phosphoserine intermediate role is filled by Ser101. The Mg(2+) site is built by Ser101, Asp240, Asp242, and Asp244. Phosphoserine is present on Ser101.

Belongs to the phosphohexose mutase family. The cofactor is Mg(2+). Post-translationally, activated by phosphorylation.

The catalysed reaction is alpha-D-glucosamine 1-phosphate = D-glucosamine 6-phosphate. In terms of biological role, catalyzes the conversion of glucosamine-6-phosphate to glucosamine-1-phosphate. This Streptococcus mutans serotype c (strain ATCC 700610 / UA159) protein is Phosphoglucosamine mutase.